The following is a 119-amino-acid chain: Holo-[acyl-carrier-protein] synthase (119 aa).

Residues Asp-8 and Glu-58 each coordinate Mg(2+).

This sequence belongs to the P-Pant transferase superfamily. AcpS family. It depends on Mg(2+) as a cofactor.

It is found in the cytoplasm. It catalyses the reaction apo-[ACP] + CoA = holo-[ACP] + adenosine 3',5'-bisphosphate + H(+). Its function is as follows. Transfers the 4'-phosphopantetheine moiety from coenzyme A to a Ser of acyl-carrier-protein. The protein is Holo-[acyl-carrier-protein] synthase of Bacillus cereus (strain ZK / E33L).